The primary structure comprises 207 residues: Large ribosomal subunit protein uL4 (207 aa).

Residues 43 to 80 (RRRSGTAKSKGRSEVSGSTRKLYRQKGTGNARSGSVKS) form a disordered region. Over residues 69 to 78 (GTGNARSGSV) the composition is skewed to polar residues.

It belongs to the universal ribosomal protein uL4 family. In terms of assembly, part of the 50S ribosomal subunit.

Functionally, one of the primary rRNA binding proteins, this protein initially binds near the 5'-end of the 23S rRNA. It is important during the early stages of 50S assembly. It makes multiple contacts with different domains of the 23S rRNA in the assembled 50S subunit and ribosome. Its function is as follows. Forms part of the polypeptide exit tunnel. In Desulforapulum autotrophicum (strain ATCC 43914 / DSM 3382 / VKM B-1955 / HRM2) (Desulfobacterium autotrophicum), this protein is Large ribosomal subunit protein uL4.